The chain runs to 493 residues: Vacuolar-processing enzyme (493 aa).

An N-terminal signal peptide occupies residues 1 to 19 (MGSSQLSTLLFFTIVVTFL). Asn-147 carries an N-linked (GlcNAc...) asparagine glycan. Residue His-174 is part of the active site. Cys-216 acts as the Nucleophile in catalysis. A disulfide bridge links Cys-249 with Cys-263. 2 N-linked (GlcNAc...) asparagine glycosylation sites follow: Asn-295 and Asn-331. Intrachain disulfides connect Cys-429/Cys-459 and Cys-441/Cys-476.

The protein belongs to the peptidase C13 family.

Its function is as follows. Asparagine-specific endopeptidase involved in the processing of vacuolar seed protein precursors into the mature forms. The chain is Vacuolar-processing enzyme from Vicia sativa (Spring vetch).